A 150-amino-acid chain; its full sequence is 3-hydroxyacyl-[acyl-carrier-protein] dehydratase FabZ (150 aa).

His54 is an active-site residue.

Belongs to the thioester dehydratase family. FabZ subfamily.

The protein localises to the cytoplasm. The enzyme catalyses a (3R)-hydroxyacyl-[ACP] = a (2E)-enoyl-[ACP] + H2O. Its function is as follows. Involved in unsaturated fatty acids biosynthesis. Catalyzes the dehydration of short chain beta-hydroxyacyl-ACPs and long chain saturated and unsaturated beta-hydroxyacyl-ACPs. The protein is 3-hydroxyacyl-[acyl-carrier-protein] dehydratase FabZ of Colwellia psychrerythraea (strain 34H / ATCC BAA-681) (Vibrio psychroerythus).